A 129-amino-acid chain; its full sequence is Glycine cleavage system H protein (129 aa).

In terms of domain architecture, Lipoyl-binding spans 24–106 (TYTVGITEHA…YADGWIFKIK (83 aa)). At lysine 65 the chain carries N6-lipoyllysine.

This sequence belongs to the GcvH family. As to quaternary structure, the glycine cleavage system is composed of four proteins: P, T, L and H. Requires (R)-lipoate as cofactor.

Its function is as follows. The glycine cleavage system catalyzes the degradation of glycine. The H protein shuttles the methylamine group of glycine from the P protein to the T protein. The polypeptide is Glycine cleavage system H protein (Salmonella arizonae (strain ATCC BAA-731 / CDC346-86 / RSK2980)).